We begin with the raw amino-acid sequence, 415 residues long: Extracellular signal-regulated kinase 1 (415 aa).

The region spanning tyrosine 66–leucine 369 is the Protein kinase domain. ATP is bound by residues valine 72 to valine 80 and lysine 95. Aspartate 190 functions as the Proton acceptor in the catalytic mechanism. Threonine 226 carries the phosphothreonine modification. A TXY motif is present at residues threonine 226–tyrosine 228. The residue at position 228 (tyrosine 228) is a Phosphotyrosine.

Belongs to the protein kinase superfamily. CMGC Ser/Thr protein kinase family. MAP kinase subfamily. It depends on Mg(2+) as a cofactor. In terms of processing, dually phosphorylated on Thr-226 and Tyr-228, which activates the enzyme.

The catalysed reaction is L-seryl-[protein] + ATP = O-phospho-L-seryl-[protein] + ADP + H(+). The enzyme catalyses L-threonyl-[protein] + ATP = O-phospho-L-threonyl-[protein] + ADP + H(+). Its activity is regulated as follows. Activated by tyrosine and threonine phosphorylation. This chain is Extracellular signal-regulated kinase 1 (CEK1), found in Candida albicans (strain WO-1) (Yeast).